The chain runs to 218 residues: Uracil-DNA glycosylase (218 aa).

The active-site Proton acceptor is the D59.

It belongs to the uracil-DNA glycosylase (UDG) superfamily. UNG family.

The protein resides in the cytoplasm. The enzyme catalyses Hydrolyzes single-stranded DNA or mismatched double-stranded DNA and polynucleotides, releasing free uracil.. Its function is as follows. Excises uracil residues from the DNA which can arise as a result of misincorporation of dUMP residues by DNA polymerase or due to deamination of cytosine. This chain is Uracil-DNA glycosylase, found in Staphylococcus aureus (strain JH1).